The following is a 392-amino-acid chain: Stilbene synthase 6 (392 aa).

A substrate-binding site is contributed by 55–58; that stretch reads KFNR. Cys164 is a catalytic residue. Residues Leu267 and 305-307 each bind substrate; that span reads GGP.

The protein belongs to the thiolase-like superfamily. Chalcone/stilbene synthases family. As to quaternary structure, homodimer.

Its subcellular location is the cytoplasm. The catalysed reaction is 4-coumaroyl-CoA + 3 malonyl-CoA + 3 H(+) = trans-resveratrol + 4 CO2 + 4 CoA. It functions in the pathway phytoalexin biosynthesis; 3,4',5-trihydroxystilbene biosynthesis; 3,4',5-trihydroxystilbene from trans-4-coumarate: step 2/2. Its function is as follows. Mediates resistance to pathogens which are sensitive to stilbenes. The sequence is that of Stilbene synthase 6 (STS) from Vitis vinifera (Grape).